The sequence spans 267 residues: Phosphate import ATP-binding protein PstB 2 (267 aa).

Residues 21–262 (LATKDLHVYY…AQCQSTNDYV (242 aa)) enclose the ABC transporter domain. ATP is bound at residue 53 to 60 (GPSGCGKS).

This sequence belongs to the ABC transporter superfamily. Phosphate importer (TC 3.A.1.7) family. In terms of assembly, the complex is composed of two ATP-binding proteins (PstB), two transmembrane proteins (PstC and PstA) and a solute-binding protein (PstS).

The protein resides in the cell membrane. The catalysed reaction is phosphate(out) + ATP + H2O = ADP + 2 phosphate(in) + H(+). Part of the ABC transporter complex PstSACB involved in phosphate import. Responsible for energy coupling to the transport system. The chain is Phosphate import ATP-binding protein PstB 2 from Streptococcus pyogenes serotype M1.